Reading from the N-terminus, the 225-residue chain is Ribosomal RNA large subunit methyltransferase E (225 aa).

Gly-76, Trp-78, Asp-99, Asp-115, and Asp-139 together coordinate S-adenosyl-L-methionine. The active-site Proton acceptor is Lys-179.

The protein belongs to the class I-like SAM-binding methyltransferase superfamily. RNA methyltransferase RlmE family.

The protein resides in the cytoplasm. The enzyme catalyses uridine(2552) in 23S rRNA + S-adenosyl-L-methionine = 2'-O-methyluridine(2552) in 23S rRNA + S-adenosyl-L-homocysteine + H(+). Its function is as follows. Specifically methylates the uridine in position 2552 of 23S rRNA at the 2'-O position of the ribose in the fully assembled 50S ribosomal subunit. This Afipia carboxidovorans (strain ATCC 49405 / DSM 1227 / KCTC 32145 / OM5) (Oligotropha carboxidovorans) protein is Ribosomal RNA large subunit methyltransferase E.